A 438-amino-acid chain; its full sequence is Serine--tRNA ligase (438 aa).

Threonine 245–glutamate 247 is an L-serine binding site. Residue arginine 276 to glutamate 278 participates in ATP binding. Residue glutamate 299 participates in L-serine binding. Glutamate 363–serine 366 serves as a coordination point for ATP. Serine 398 lines the L-serine pocket.

This sequence belongs to the class-II aminoacyl-tRNA synthetase family. Type-1 seryl-tRNA synthetase subfamily. As to quaternary structure, homodimer. The tRNA molecule binds across the dimer.

The protein resides in the cytoplasm. The enzyme catalyses tRNA(Ser) + L-serine + ATP = L-seryl-tRNA(Ser) + AMP + diphosphate + H(+). The catalysed reaction is tRNA(Sec) + L-serine + ATP = L-seryl-tRNA(Sec) + AMP + diphosphate + H(+). It functions in the pathway aminoacyl-tRNA biosynthesis; selenocysteinyl-tRNA(Sec) biosynthesis; L-seryl-tRNA(Sec) from L-serine and tRNA(Sec): step 1/1. Functionally, catalyzes the attachment of serine to tRNA(Ser). Is also able to aminoacylate tRNA(Sec) with serine, to form the misacylated tRNA L-seryl-tRNA(Sec), which will be further converted into selenocysteinyl-tRNA(Sec). The sequence is that of Serine--tRNA ligase from Delftia acidovorans (strain DSM 14801 / SPH-1).